A 570-amino-acid chain; its full sequence is PTS system lactose-specific EIICB component (570 aa).

In terms of domain architecture, PTS EIIC type-3 spans 9 to 410; it reads IEKGKPFFEK…VVDIIIYYPF (402 aa). The next 9 helical transmembrane spans lie at 31–51, 65–85, 104–124, 133–153, 178–198, 223–243, 283–303, 340–360, and 382–402; these read GFIS…IAYV, AILM…VAGT, INFI…ASDP, AFMG…TVIV, FKDL…DLVI, GWIG…VGIH, MFIV…MFMW, VFFI…KLFV, and IIMG…LIVV. Residues 467 to 570 form the PTS EIIB type-3 domain; that stretch reads QTNVLVLCAG…LDFVQQQFEN (104 aa). The Phosphocysteine intermediate; for EIIB activity role is filled by Cys-474. Position 474 is a phosphocysteine; by EIIA (Cys-474).

The protein resides in the cell membrane. The enzyme catalyses lactose(out) + N(pros)-phospho-L-histidyl-[protein] = lactose 6-phosphate(in) + L-histidyl-[protein]. Functionally, the phosphoenolpyruvate-dependent sugar phosphotransferase system (sugar PTS), a major carbohydrate active transport system, catalyzes the phosphorylation of incoming sugar substrates concomitantly with their translocation across the cell membrane. The enzyme II LacEF PTS system is involved in lactose transport, but can also use galactose, isopropyl beta-thio-galactopyranoside and thiomethyl beta-D-galactopyranoside (TMG) as substrates. The protein is PTS system lactose-specific EIICB component of Staphylococcus aureus.